A 561-amino-acid chain; its full sequence is Eukaryotic translation initiation factor 3 subunit D-1 (561 aa).

Positions 98–164 (VQKPPHQRGR…RGPPPKMRES (67 aa)) are disordered. Residues 100-121 (KPPHQRGRFRNMRNSRSGRGRN) are compositionally biased toward basic residues. A Phosphothreonine modification is found at Thr128. The tract at residues 289-303 (EFDLLTVNETSVEPP) is RNA gate.

Belongs to the eIF-3 subunit D family. In terms of assembly, component of the eukaryotic translation initiation factor 3 (eIF-3) complex. The eIF-3 complex interacts with pix.

The protein resides in the cytoplasm. Its function is as follows. mRNA cap-binding component of the eukaryotic translation initiation factor 3 (eIF-3) complex, which is involved in protein synthesis of a specialized repertoire of mRNAs and, together with other initiation factors, stimulates binding of mRNA and methionyl-tRNAi to the 40S ribosome. The eIF-3 complex specifically targets and initiates translation of a subset of mRNAs involved in cell proliferation. In the eIF-3 complex, eif3d specifically recognizes and binds the 7-methylguanosine cap of a subset of mRNAs. This chain is Eukaryotic translation initiation factor 3 subunit D-1, found in Drosophila ananassae (Fruit fly).